The sequence spans 654 residues: Interferon-induced GTP-binding protein Mx1 (654 aa).

At Met1 the chain carries N-acetylmethionine. 2 stretches are compositionally biased toward basic and acidic residues: residues Met1 to Asp12 and Asp23 to Ser32. Residues Met1–Lys33 are disordered. Residues Asp62–Pro335 enclose the Dynamin-type G domain. The G1 motif stretch occupies residues Gly72–Ser79. Residue Gly72 to Ser79 participates in GTP binding. The interval Val97–Arg99 is G2 motif. The segment at Asp173–Gly176 is G3 motif. Residues Asp173–Ile177 and Thr242–Asp245 each bind GTP. The G4 motif stretch occupies residues Thr242–Asp245. The interval Lys274–Gly277 is G5 motif. The interval Leu336–Glu361 is bundle signaling element (BSE). Residues Glu361–Cys528 are middle domain. Residues Glu362–Glu624 form a stalk region. Positions Glu544–Glu563 are disordered. The critical for lipid-binding stretch occupies residues Lys549–Lys552. The 89-residue stretch at Thr566–Gly654 folds into the GED domain.

The protein belongs to the TRAFAC class dynamin-like GTPase superfamily. Dynamin/Fzo/YdjA family. Homooligomer. Oligomerizes into multimeric filamentous or ring-like structures by virtue of its stalk domain. Oligomerization is critical for GTPase activity, protein stability, and recognition of viral target structures. Interacts with TRPC1, TRPC3, TRPC4, TRPC5, TRPC6 and TRPC7. Interacts with HSPA5. Interacts with DDX39A and DDX39B. Interacts with TUBB/TUBB5. ISGylated.

It is found in the cytoplasm. The protein resides in the endoplasmic reticulum membrane. Its subcellular location is the perinuclear region. Its function is as follows. Interferon-induced dynamin-like GTPase with antiviral activity. In Ovis aries (Sheep), this protein is Interferon-induced GTP-binding protein Mx1 (MX1).